A 622-amino-acid chain; its full sequence is Dehydrogenase mpl7 (622 aa).

FAD contacts are provided by residues 23 to 24, 44 to 45, and 102 to 105; these read TA, EA, and NFMS. Residue H554 is the Proton acceptor of the active site. FAD contacts are provided by residues A582 and 593-594; that span reads IM.

This sequence belongs to the GMC oxidoreductase family. As to quaternary structure, homodimer. FAD is required as a cofactor.

It functions in the pathway mycotoxin biosynthesis. Functionally, dehydrogenase; part of the gene cluster that mediates the biosynthesis of the mycotoxin citrinin, a hepato-nephrotoxic compound to humans due to inhibition of respiration complex III. The pathway begins with the synthesis of a keto-aldehyde intermediate by the citrinin PKS (pksCT) from successive condensations of 4 malonyl-CoA units, presumably with a simple acetyl-CoA starter unit. Release of the keto-aldehyde intermediate is consistent with the presence of the C-terminal reductive release domain. Mp11 collaborates with pksCT by catalyzing the hydrolysis of ACP-bound acyl intermediates to free the ACP from stalled intermediates. Mpl2 then catalyzes the oxidation of the C-12 methyl of the ketone intermediate to an alcohol intermediate which is further oxidized by the oxidoreductase mpl7 to produce a bisaldehyde intermediate. The fourth catalytic step is catalyzed by the mpl4 aldehyde dehydrogenase. The final transformation is the reduction of C-3 by mpl6 to provide the chemically stable citrinin nucleus. The protein is Dehydrogenase mpl7 of Monascus purpureus (Red mold).